Here is a 587-residue protein sequence, read N- to C-terminus: FAD-dependent monooxygenase ankC (587 aa).

A helical transmembrane segment spans residues 7–27 (AVDVLIIGAGPAGLIAAMWMA). Tyr-245 and Asp-311 together coordinate FAD.

It belongs to the PheA/TfdB FAD monooxygenase family. Homodimer. FAD serves as cofactor.

Its subcellular location is the membrane. The catalysed reaction is cyclo(L-arginyl-L-dehydrotyrosyl) + AH2 + O2 = cyclo(L-arginyl-(Z)-dehydro-3,4-dihydroxytyrosyl) + A + H2O. It functions in the pathway secondary metabolite biosynthesis. Functionally, FAD-dependent monooxygenase; part of the ank cluster that mediates the biosynthesis of NK13650 C, a highly modified cyclo-arginine-tyrosine dipeptide. AnkC uses as substrate the dehydro-cyclodipeptide intermediate generated by the monooxygase ankB and acts as a hydroxylase that installs the m-OH through a canonical flavin-dependent aromatic hydroxylation mechanism. Within the pathway, the cyclodipeptide synthase ankA acts as the scaffold-generating enzyme and is responsible for formation of the cyclo-Arg-Tyr diketopiperazine (cRY) from L-Arg and L-Tyr. The ankA product cRY is desaturated by the cytochrome P450 monooxygenase ankB to yield a dehydro-cyclodipeptide intermediate. The FAD-dependent monooxygenase ankC then installs the m-OH, ankD catalyzes the attachment of L-homoserine, and ankE ligates citrate to the ankD product to yield NK13650 B. The O-methyltransferase ankF is responsible for methylation of the C-17 phenol group of NK13650 B to produce NK13650 D. Amidation of NK13650 D with L-Asp by ankG then leads to the production of NK13650 C, whereas amidation of NK13650 B produces NK13650 A. This chain is FAD-dependent monooxygenase ankC, found in Aspergillus thermomutatus (Neosartorya pseudofischeri).